A 74-amino-acid chain; its full sequence is MSKICQITGKKPITGNNRSHAMNATKRRFFPNLHFHKFWNPKTKRFIILRVSAKGMRNIDKLGLNSLKIKKLHK.

The protein belongs to the bacterial ribosomal protein bL28 family.

The sequence is that of Large ribosomal subunit protein bL28 from Buchnera aphidicola subsp. Baizongia pistaciae (strain Bp).